A 28-amino-acid polypeptide reads, in one-letter code: GVFCGEPCIKASCSIPGCECIAGLCYKN.

3 disulfide bridges follow: Cys4–Cys18, Cys8–Cys20, and Cys13–Cys25.

Post-translationally, this is a cyclic peptide. Contains 3 disulfide bonds.

Probably participates in a plant defense mechanism. The chain is Cyclotide vodo I3 from Viola odorata (Sweet violet).